Consider the following 247-residue polypeptide: Anionic trypsin (247 aa).

A signal peptide spans 1–15; sequence MHPLLILAFVGAAVA. Positions 16–23 are cleaved as a propeptide — activation peptide; that stretch reads FPSDDDDK. In terms of domain architecture, Peptidase S1 spans 24–244; it reads IVGGYTCAEN…YVDWIQETIA (221 aa). Cystine bridges form between C30–C160, C48–C64, C132–C233, C139–C206, C171–C185, and C196–C220. H63 serves as the catalytic Charge relay system. Positions 75, 77, 80, and 85 each coordinate Ca(2+). Residue D107 is the Charge relay system of the active site. S200 serves as the catalytic Charge relay system.

The protein belongs to the peptidase S1 family. It depends on Ca(2+) as a cofactor. In terms of processing, not sulfated on tyrosine residue(s).

Its subcellular location is the secreted. It is found in the extracellular space. The catalysed reaction is Preferential cleavage: Arg-|-Xaa, Lys-|-Xaa.. The chain is Anionic trypsin from Bos taurus (Bovine).